We begin with the raw amino-acid sequence, 122 residues long: Large ribosomal subunit protein uL14 (122 aa).

It belongs to the universal ribosomal protein uL14 family. Part of the 50S ribosomal subunit. Forms a cluster with proteins L3 and L19. In the 70S ribosome, L14 and L19 interact and together make contacts with the 16S rRNA in bridges B5 and B8.

Functionally, binds to 23S rRNA. Forms part of two intersubunit bridges in the 70S ribosome. The polypeptide is Large ribosomal subunit protein uL14 (Bartonella bacilliformis (strain ATCC 35685 / KC583 / Herrer 020/F12,63)).